The sequence spans 124 residues: Holo-[acyl-carrier-protein] synthase (124 aa).

Mg(2+)-binding residues include aspartate 8 and glutamate 58.

This sequence belongs to the P-Pant transferase superfamily. AcpS family. Mg(2+) is required as a cofactor.

The protein resides in the cytoplasm. It carries out the reaction apo-[ACP] + CoA = holo-[ACP] + adenosine 3',5'-bisphosphate + H(+). Functionally, transfers the 4'-phosphopantetheine moiety from coenzyme A to a Ser of acyl-carrier-protein. The protein is Holo-[acyl-carrier-protein] synthase of Lacticaseibacillus casei (strain BL23) (Lactobacillus casei).